Here is a 117-residue protein sequence, read N- to C-terminus: Anti-sigma F factor antagonist (117 aa).

One can recognise an STAS domain in the interval 2–115; the sequence is HFQLEMVTRE…QAIDRVRGIV (114 aa). S58 bears the Phosphoserine mark.

This sequence belongs to the anti-sigma-factor antagonist family. Post-translationally, phosphorylated by SpoIIAB on a serine residue.

In the phosphorylated form it could act as an anti-anti-sigma factor that counteracts SpoIIAB and thus releases sigma f from inhibition. This chain is Anti-sigma F factor antagonist (spoIIAA), found in Lysinibacillus sphaericus (Bacillus sphaericus).